The sequence spans 590 residues: Protein I'm not dead yet (590 aa).

11 helical membrane passes run 43–63 (GLVVFLVPLLCLPVMLLNEGA), 82–102 (ALPLYVTSMIPIVAFPIMGIM), 115–135 (TLVMFMGGIMVALAVEYCNLH), 153–173 (LHFGLIMVTMFLSMWISNAAC), 224–244 (LCYYLGIAYASSLGGCGTIIG), 270–290 (TFMFYSVPSMLVYTLLTFVFL), 329–349 (LGPMSIHEIQVMILFIFMVVM), 373–393 (SMPTIFVVVMCFMLPANYAFL), 457–477 (VLPNSVLLLVVILVAVFLTAF), 509–529 (AGLACSMAFHLPVSTPPNALV), and 540–560 (MAIAGIGPTIITIITLFVFCQ).

The protein belongs to the SLC13A/DASS transporter (TC 2.A.47) family. NADC subfamily. As to expression, in adults, abundantly expressed in the fat body, basolateral region of midgut cells and oenocytes. Low level expression is seen in the halteres, procardia, restricted regions of the esophagus and hindgut, base of the legs and in a subset of cells in the third segment of the antennae.

The protein localises to the basolateral cell membrane. Its function is as follows. Cation-independent electroneutral transporter (not associated with membrane depolarization) of a variety of tricarboxylic and dicarboxylic acid-cycle intermediates. There is also small, but detectable, transport of monocarboxylics. Transport is through the epithelium of the gut and across the plasma membranes of organs involved in intermediary metabolism and storage. Affinity for substrates is citrate &gt; succinate &gt; pyruvate. Fumarate, a-ketoglutarate, and glutarate are also transported, but not lactate. Transport mechanism that is not coupled to Na(+), K(+), or Cl(-). Function is shown in Xenopus oocytes and human retinal pigment epithelial (HRPE) cell lines. This chain is Protein I'm not dead yet (Indy), found in Drosophila melanogaster (Fruit fly).